Here is a 931-residue protein sequence, read N- to C-terminus: Envelope glycoprotein B (931 aa).

Positions 1–71 (MSPCGYYSKW…FSMFVTAVVS (71 aa)) are cleaved as a signal peptide. The Virion surface portion of the chain corresponds to 72–786 (VSPSSFYESL…HGFTTFLSNP (715 aa)). Intrachain disulfides connect Cys-122/Cys-584, Cys-139/Cys-540, Cys-213/Cys-277, Cys-369/Cys-417, and Cys-608/Cys-645. Asn-147 carries N-linked (GlcNAc...) asparagine; by host glycosylation. Residues 179–185 (AWAGSSY) form an involved in fusion and/or binding to host membrane region. N-linked (GlcNAc...) asparagine; by host glycosylation is present at Asn-257. The involved in fusion and/or binding to host membrane stretch occupies residues 264 to 271 (GTPGTYRT). Residues Asn-435, Asn-503, Asn-620, and Asn-686 are each glycosylated (N-linked (GlcNAc...) asparagine; by host). 2 hydrophobic membrane proximal region regions span residues 731 to 784 (IDKV…TFLS) and 764 to 784 (VVLGATGALLSTVHGFTTFLS). A helical transmembrane segment spans residues 787 to 807 (FGALAVGLLVLAGLVAAFFAY). Residues 808–931 (RYVLKLKTSP…RVRTENVTGV (124 aa)) lie on the Intravirion side of the membrane. The Golgi targeting motif lies at 881-884 (YMTL). Residues 904–906 (LLT) carry the Di-leucine internalization motif motif. Residues 920–923 (YSRV) carry the Internalization motif motif.

It belongs to the herpesviridae glycoprotein B family. As to quaternary structure, homotrimer; disulfide-linked. Binds to heparan sulfate proteoglycans. Interacts with gH/gL heterodimer. Interacts with gE. A proteolytic cleavage by host furin generates two subunits that remain linked by disulfide bonds.

Its subcellular location is the virion membrane. It localises to the host cell membrane. The protein localises to the host endosome membrane. It is found in the host Golgi apparatus membrane. In terms of biological role, envelope glycoprotein that forms spikes at the surface of virion envelope. Essential for the initial attachment to heparan sulfate moieties of the host cell surface proteoglycans. Involved in fusion of viral and cellular membranes leading to virus entry into the host cell. Following initial binding to its host receptors, membrane fusion is mediated by the fusion machinery composed at least of gB and the heterodimer gH/gL. May be involved in the fusion between the virion envelope and the outer nuclear membrane during virion egress. This chain is Envelope glycoprotein B, found in Varicella-zoster virus (strain Dumas) (HHV-3).